The chain runs to 261 residues: 5'-nucleotidase SurE (261 aa).

A divalent metal cation is bound by residues D12, D13, S43, and N99.

The protein belongs to the SurE nucleotidase family. A divalent metal cation serves as cofactor.

It localises to the cytoplasm. The catalysed reaction is a ribonucleoside 5'-phosphate + H2O = a ribonucleoside + phosphate. Nucleotidase that shows phosphatase activity on nucleoside 5'-monophosphates. This is 5'-nucleotidase SurE from Polynucleobacter asymbioticus (strain DSM 18221 / CIP 109841 / QLW-P1DMWA-1) (Polynucleobacter necessarius subsp. asymbioticus).